The sequence spans 259 residues: Global transcriptional regulator CodY (259 aa).

The GAF domain stretch occupies residues 1–155 (MTLLEKTRKI…GGTVVGMEIL (155 aa)). The segment at residues 203–222 (ASKIADRVGITRSVIVNALR) is a DNA-binding region (H-T-H motif).

It belongs to the CodY family.

It is found in the cytoplasm. In terms of biological role, DNA-binding global transcriptional regulator which is involved in the adaptive response to starvation and acts by directly or indirectly controlling the expression of numerous genes in response to nutrient availability. During rapid exponential growth, CodY is highly active and represses genes whose products allow adaptation to nutrient depletion. This is Global transcriptional regulator CodY from Listeria welshimeri serovar 6b (strain ATCC 35897 / DSM 20650 / CCUG 15529 / CIP 8149 / NCTC 11857 / SLCC 5334 / V8).